We begin with the raw amino-acid sequence, 281 residues long: Probable endonuclease 4 (281 aa).

Residues histidine 68, histidine 108, glutamate 145, aspartate 179, histidine 182, histidine 216, aspartate 229, histidine 231, and glutamate 261 each coordinate Zn(2+).

Belongs to the AP endonuclease 2 family. The cofactor is Zn(2+).

The catalysed reaction is Endonucleolytic cleavage to 5'-phosphooligonucleotide end-products.. Its function is as follows. Endonuclease IV plays a role in DNA repair. It cleaves phosphodiester bonds at apurinic or apyrimidinic (AP) sites, generating a 3'-hydroxyl group and a 5'-terminal sugar phosphate. The protein is Probable endonuclease 4 of Trichlorobacter lovleyi (strain ATCC BAA-1151 / DSM 17278 / SZ) (Geobacter lovleyi).